Reading from the N-terminus, the 307-residue chain is Heparan sulfate glucosamine 3-O-sulfotransferase 1 (307 aa).

Positions 1 to 20 are cleaved as a signal peptide; the sequence is MAALLLGAVLLVAQPQLVPS. Asn48 carries an N-linked (GlcNAc...) asparagine glycan. 3'-phosphoadenylyl sulfate-binding positions include 64–68, Arg147, and Ser155; that span reads KGGTR. 3 N-linked (GlcNAc...) asparagine glycosylation sites follow: Asn192, Asn242, and Asn249. Tyr255 is a 3'-phosphoadenylyl sulfate binding site. An intrachain disulfide couples Cys256 to Cys265. 270–274 is a binding site for 3'-phosphoadenylyl sulfate; that stretch reads KGRAH.

This sequence belongs to the sulfotransferase 1 family. Highly expressed in the brain and kidney and weakly expressed in the heart, lung and placenta.

It is found in the golgi apparatus lumen. It catalyses the reaction alpha-D-glucosaminyl-[heparan sulfate](n) + 3'-phosphoadenylyl sulfate = 3-sulfo-alpha-D-glucosaminyl-[heparan sulfate](n) + adenosine 3',5'-bisphosphate + H(+). Its function is as follows. Sulfotransferase that utilizes 3'-phospho-5'-adenylyl sulfate (PAPS) to catalyze the transfer of a sulfo group to position 3 of glucosamine residues in heparan. Catalyzes the rate limiting step in the biosynthesis of heparan sulfate (HSact). This modification is a crucial step in the biosynthesis of anticoagulant heparan sulfate as it completes the structure of the antithrombin pentasaccharide binding site. The protein is Heparan sulfate glucosamine 3-O-sulfotransferase 1 (HS3ST1) of Homo sapiens (Human).